Reading from the N-terminus, the 192-residue chain is Thymidylate kinase (192 aa).

7 to 14 (GIDCVGKS) is a binding site for ATP.

The protein belongs to the thymidylate kinase family.

The enzyme catalyses dTMP + ATP = dTDP + ADP. Its function is as follows. Phosphorylation of dTMP to form dTDP in both de novo and salvage pathways of dTTP synthesis. This is Thymidylate kinase (tmk) from Campylobacter jejuni subsp. jejuni serotype O:2 (strain ATCC 700819 / NCTC 11168).